Consider the following 446-residue polypeptide: Maltoporin (446 aa).

Positions 1 to 25 (MMITLRKLPLAVAVAAGVMSAQAMA) are cleaved as a signal peptide.

Belongs to the porin LamB (TC 1.B.3) family. Homotrimer formed of three 18-stranded antiparallel beta-barrels, containing three independent channels.

It is found in the cell outer membrane. The catalysed reaction is beta-maltose(in) = beta-maltose(out). Its function is as follows. Involved in the transport of maltose and maltodextrins. The sequence is that of Maltoporin from Escherichia coli O127:H6 (strain E2348/69 / EPEC).